The primary structure comprises 228 residues: Protein GlxC (228 aa).

It belongs to the FwdC/FmdC family.

The polypeptide is Protein GlxC (glxC) (Rhizobium meliloti (strain 1021) (Ensifer meliloti)).